Reading from the N-terminus, the 510-residue chain is Probable inositol 3-phosphate synthase isozyme 3 (510 aa).

This sequence belongs to the myo-inositol 1-phosphate synthase family. NAD(+) serves as cofactor. Expressed in siliques, leaves, roots, seed endosperm, but not in embryos. Highest expression in roots. Confined to vascular tissue and hydathodes of leaves.

It localises to the cytoplasm. It carries out the reaction D-glucose 6-phosphate = 1D-myo-inositol 3-phosphate. It functions in the pathway polyol metabolism; myo-inositol biosynthesis; myo-inositol from D-glucose 6-phosphate: step 1/2. Key enzyme in myo-inositol biosynthesis pathway that catalyzes the conversion of glucose 6-phosphate to 1-myo-inositol 1-phosphate in a NAD-dependent manner. The sequence is that of Probable inositol 3-phosphate synthase isozyme 3 (IPS3) from Arabidopsis thaliana (Mouse-ear cress).